The sequence spans 362 residues: Uroporphyrinogen decarboxylase (362 aa).

Substrate-binding positions include 39–43, aspartate 88, tyrosine 165, threonine 220, and histidine 334; that span reads RQAGR.

It belongs to the uroporphyrinogen decarboxylase family. As to quaternary structure, homodimer.

The protein localises to the cytoplasm. The enzyme catalyses uroporphyrinogen III + 4 H(+) = coproporphyrinogen III + 4 CO2. It participates in porphyrin-containing compound metabolism; protoporphyrin-IX biosynthesis; coproporphyrinogen-III from 5-aminolevulinate: step 4/4. Catalyzes the decarboxylation of four acetate groups of uroporphyrinogen-III to yield coproporphyrinogen-III. This Synechococcus sp. (strain JA-3-3Ab) (Cyanobacteria bacterium Yellowstone A-Prime) protein is Uroporphyrinogen decarboxylase.